We begin with the raw amino-acid sequence, 275 residues long: Small ribosomal subunit protein uS2 (275 aa).

The interval Ala-226–Glu-275 is disordered. The segment covering Ala-264–Glu-275 has biased composition (low complexity).

Belongs to the universal ribosomal protein uS2 family.

The protein is Small ribosomal subunit protein uS2 of Xanthomonas campestris pv. campestris (strain ATCC 33913 / DSM 3586 / NCPPB 528 / LMG 568 / P 25).